The primary structure comprises 140 residues: Holo-[acyl-carrier-protein] synthase (140 aa).

The Mg(2+) site is built by Asp8 and Glu57.

It belongs to the P-Pant transferase superfamily. AcpS family. Mg(2+) serves as cofactor.

It is found in the cytoplasm. It catalyses the reaction apo-[ACP] + CoA = holo-[ACP] + adenosine 3',5'-bisphosphate + H(+). Its function is as follows. Transfers the 4'-phosphopantetheine moiety from coenzyme A to a Ser of acyl-carrier-protein. The sequence is that of Holo-[acyl-carrier-protein] synthase from Beijerinckia indica subsp. indica (strain ATCC 9039 / DSM 1715 / NCIMB 8712).